Consider the following 192-residue polypeptide: Apoptosis regulator BAX (192 aa).

M1 bears the N-acetylmethionine mark. The BH3 motif lies at L59–N73. Residues D98 to S118 carry the BH1 motif. Residue K128 forms a Glycyl lysine isopeptide (Lys-Gly) (interchain with G-Cter in ubiquitin) linkage. The BH2 motif lies at V150–F165. Residues T172–G192 form a helical membrane-spanning segment. K190 participates in a covalent cross-link: Glycyl lysine isopeptide (Lys-Gly) (interchain with G-Cter in ubiquitin).

The protein belongs to the Bcl-2 family. As to quaternary structure, homodimer. Forms higher oligomers under stress conditions. Forms heterooligomers with BAK. Interacts with BCL2L11. Interaction with BCL2L11 promotes BAX oligomerization and association with mitochondrial membranes, with subsequent release of cytochrome c. Forms heterodimers with BCL2. Forms heterodimers with BCL2L1 isoform Bcl-X(L), BCL2L2, MCL1 and A1. Interacts with SH3GLB1. Interacts with SFN and YWHAZ; the interaction occurs in the cytoplasm. Under stress conditions, JNK-mediated phosphorylation of SFN and YWHAZ, releases BAX to mitochondria. Interacts with RNF144B, which regulates the ubiquitin-dependent stability of BAX. Interacts with CLU under stress conditions that cause a conformation change leading to BAX oligomerization and association with mitochondria. Does not interact with CLU in unstressed cells. Interacts with FAIM2/LFG2. Interacts with BOP. Interacts (via a C-terminal 33 residues) with NOL3 (via CARD domain); inhibits BAX activation and translocationand consequently cytochrome c release from mitochondria. Interacts with GIMAP3/IAN4 and GIMAP5/IAN5; this interaction is increased, when cells initiate apoptosis upon IL2 withdrawal. Interacts with IRF3; the interaction is direct and, upon virus infection, mediates the formation of the apoptosis complex TOMM70:HSP90AA1:IRF3:BAX. Interacts with MOAP1, facilitating BAX-dependent mitochondrial outer membrane permeabilization and apoptosis. Interacts with BCL2L10/BCL-B. Interacts with non-acetylated XRCC6/Ku70; this interaction leads to BAX sequestration in the cytosol, away from the mitochondria, preventing BAX-mediated apoptosis. In terms of assembly, (Microbial infection) Interacts with gamma-herpesvirus 68 protein vBCL2. Ubiquitinated in the absence of XRCC6/Ku70. Ubiquitinated on Lys-128 and Lys-190. 'Lys-63'-linked polyubiquitin chains on Lys-128 are removed by USP12. In terms of tissue distribution, expressed in a wide variety of tissues.

It is found in the mitochondrion outer membrane. It localises to the cytoplasm. Its subcellular location is the nucleus. Functionally, accelerates programmed cell death by binding to, and antagonizing the apoptosis repressor BCL2 or its adenovirus homolog E1B 19k protein. Under stress conditions, undergoes a conformation change that causes translocation to the mitochondrion membrane, leading to the release of cytochrome c that then triggers apoptosis. Promotes activation of CASP3, and thereby apoptosis. BAX deficiency leads to lymphoid hyperplasia and male sterility, because of the cessation of sperm production. This Mus musculus (Mouse) protein is Apoptosis regulator BAX (Bax).